A 298-amino-acid polypeptide reads, in one-letter code: Octopine catabolism/uptake operon regulatory protein OccR (298 aa).

The region spanning 1–58 (MNLRQVEAFRAVMLTGQMTAAAELMLVTQPAISRLIKDFEQATKLQLFERRGNHIIPT) is the HTH lysR-type domain. The segment at residues 18-37 (MTAAAELMLVTQPAISRLIK) is a DNA-binding region (H-T-H motif).

It belongs to the LysR transcriptional regulatory family.

Its function is as follows. Positive regulatory protein for the occ operon involved in octopine catabolism and uptake. Also acts as a negative regulator of its expression. This is Octopine catabolism/uptake operon regulatory protein OccR (occR) from Agrobacterium tumefaciens (strain Ach5).